Consider the following 213-residue polypeptide: Pyridoxine/pyridoxamine 5'-phosphate oxidase (213 aa).

Residues 9–12 (RKSY) and lysine 67 contribute to the substrate site. FMN contacts are provided by residues 62 to 67 (RVVLIK), 77 to 78 (YT), arginine 83, and lysine 84. Positions 124, 128, and 132 each coordinate substrate. Residues 141 to 142 (QS) and tryptophan 185 contribute to the FMN site. Position 191 to 193 (191 to 193 (RLH)) interacts with substrate. Arginine 195 contributes to the FMN binding site.

It belongs to the pyridoxamine 5'-phosphate oxidase family. As to quaternary structure, homodimer. The cofactor is FMN.

It carries out the reaction pyridoxamine 5'-phosphate + O2 + H2O = pyridoxal 5'-phosphate + H2O2 + NH4(+). The catalysed reaction is pyridoxine 5'-phosphate + O2 = pyridoxal 5'-phosphate + H2O2. The protein operates within cofactor metabolism; pyridoxal 5'-phosphate salvage; pyridoxal 5'-phosphate from pyridoxamine 5'-phosphate: step 1/1. It functions in the pathway cofactor metabolism; pyridoxal 5'-phosphate salvage; pyridoxal 5'-phosphate from pyridoxine 5'-phosphate: step 1/1. Functionally, catalyzes the oxidation of either pyridoxine 5'-phosphate (PNP) or pyridoxamine 5'-phosphate (PMP) into pyridoxal 5'-phosphate (PLP). In Methylibium petroleiphilum (strain ATCC BAA-1232 / LMG 22953 / PM1), this protein is Pyridoxine/pyridoxamine 5'-phosphate oxidase.